We begin with the raw amino-acid sequence, 133 residues long: ATP synthase epsilon chain (133 aa).

This sequence belongs to the ATPase epsilon chain family. F-type ATPases have 2 components, CF(1) - the catalytic core - and CF(0) - the membrane proton channel. CF(1) has five subunits: alpha(3), beta(3), gamma(1), delta(1), epsilon(1). CF(0) has three main subunits: a, b and c.

The protein resides in the cell membrane. Functionally, produces ATP from ADP in the presence of a proton gradient across the membrane. This is ATP synthase epsilon chain from Clostridium perfringens (strain ATCC 13124 / DSM 756 / JCM 1290 / NCIMB 6125 / NCTC 8237 / Type A).